We begin with the raw amino-acid sequence, 298 residues long: Probable alpha-L-glutamate ligase (298 aa).

The ATP-grasp domain occupies 108-290 (LQLLLKTGVP…IAAEIIDYIE (183 aa)). ATP is bound by residues lysine 144, 181–182 (DF), aspartate 190, and 214–216 (RAN). Residues aspartate 251, glutamate 263, and asparagine 265 each contribute to the Mg(2+) site. Mn(2+)-binding residues include aspartate 251, glutamate 263, and asparagine 265.

It belongs to the RimK family. Mg(2+) serves as cofactor. It depends on Mn(2+) as a cofactor.

In Haemophilus influenzae (strain PittEE), this protein is Probable alpha-L-glutamate ligase.